The primary structure comprises 89 residues: Small ribosomal subunit protein uS15 (89 aa).

It belongs to the universal ribosomal protein uS15 family. Part of the 30S ribosomal subunit. Forms a bridge to the 50S subunit in the 70S ribosome, contacting the 23S rRNA.

In terms of biological role, one of the primary rRNA binding proteins, it binds directly to 16S rRNA where it helps nucleate assembly of the platform of the 30S subunit by binding and bridging several RNA helices of the 16S rRNA. Its function is as follows. Forms an intersubunit bridge (bridge B4) with the 23S rRNA of the 50S subunit in the ribosome. The sequence is that of Small ribosomal subunit protein uS15 from Dictyoglomus turgidum (strain DSM 6724 / Z-1310).